A 356-amino-acid polypeptide reads, in one-letter code: GTPase Obg (356 aa).

One can recognise an Obg domain in the interval 1–159 (MKFLDEAKVY…RWIWLRMKLI (159 aa)). One can recognise an OBG-type G domain in the interval 160-327 (ADAGLVGLPN…ALRKLADVIS (168 aa)). Residues 166 to 173 (GLPNAGKS), 191 to 195 (FTTLH), 212 to 215 (DIPG), 279 to 282 (NKID), and 308 to 310 (SGA) contribute to the GTP site. Mg(2+) contacts are provided by Ser-173 and Thr-193. The segment at 332-356 (SIKAKSTSDSAATEEPWAAPLPPQG) is disordered.

It belongs to the TRAFAC class OBG-HflX-like GTPase superfamily. OBG GTPase family. Monomer. The cofactor is Mg(2+).

The protein localises to the cytoplasm. An essential GTPase which binds GTP, GDP and possibly (p)ppGpp with moderate affinity, with high nucleotide exchange rates and a fairly low GTP hydrolysis rate. Plays a role in control of the cell cycle, stress response, ribosome biogenesis and in those bacteria that undergo differentiation, in morphogenesis control. This is GTPase Obg from Bradyrhizobium sp. (strain BTAi1 / ATCC BAA-1182).